The chain runs to 37 residues: Large ribosomal subunit protein bL36 (37 aa).

This sequence belongs to the bacterial ribosomal protein bL36 family.

This Clostridium kluyveri (strain NBRC 12016) protein is Large ribosomal subunit protein bL36.